The chain runs to 432 residues: D-amino acid dehydrogenase (432 aa).

Residue 3–17 coordinates FAD; sequence VVILGSGVVGVTSAW.

It belongs to the DadA oxidoreductase family. The cofactor is FAD.

It carries out the reaction a D-alpha-amino acid + A + H2O = a 2-oxocarboxylate + AH2 + NH4(+). Its pathway is amino-acid degradation; D-alanine degradation; NH(3) and pyruvate from D-alanine: step 1/1. Oxidative deamination of D-amino acids. The polypeptide is D-amino acid dehydrogenase (Salmonella choleraesuis (strain SC-B67)).